Here is a 650-residue protein sequence, read N- to C-terminus: DNA ligase (650 aa).

Residues 30–34 (DEQYD) and 79–80 (SL) contribute to the NAD(+) site. The active-site N6-AMP-lysine intermediate is the K110. Residues R131, E165, and K304 each coordinate NAD(+). Residues C398, C401, C414, and C419 each contribute to the Zn(2+) site. A BRCT domain is found at 573–650 (DNNNVFFNKT…EEEFLAQINK (78 aa)).

It belongs to the NAD-dependent DNA ligase family. LigA subfamily. It depends on Mg(2+) as a cofactor. The cofactor is Mn(2+).

The enzyme catalyses NAD(+) + (deoxyribonucleotide)n-3'-hydroxyl + 5'-phospho-(deoxyribonucleotide)m = (deoxyribonucleotide)n+m + AMP + beta-nicotinamide D-nucleotide.. Its function is as follows. DNA ligase that catalyzes the formation of phosphodiester linkages between 5'-phosphoryl and 3'-hydroxyl groups in double-stranded DNA using NAD as a coenzyme and as the energy source for the reaction. It is essential for DNA replication and repair of damaged DNA. In Helicobacter hepaticus (strain ATCC 51449 / 3B1), this protein is DNA ligase.